The chain runs to 282 residues: E3 ubiquitin-protein ligase SIAH1 (282 aa).

Residues 1 to 17 (MSRQTATALPTGTSKCP) are compositionally biased toward polar residues. A disordered region spans residues 1-22 (MSRQTATALPTGTSKCPPSQRV). At serine 19 the chain carries Phosphoserine; by ATM and ATR. The segment at 41 to 76 (CPVCFDYVLPPILQCQSGHLVCSNCRPKLTCCPTCR) adopts an RING-type zinc-finger fold. Residues 90–282 (VANSVLFPCK…LGINVTISMC (193 aa)) are SBD. The SIAH-type zinc-finger motif lies at 93–153 (SVLFPCKYAS…VMPHLMHQHK (61 aa)). Cysteine 98, cysteine 105, histidine 117, cysteine 121, cysteine 128, cysteine 135, histidine 147, and histidine 152 together coordinate Zn(2+).

Belongs to the SINA (Seven in absentia) family. Homodimer. Component of some large E3 complex composed of UBE2D1, SIAH1, CACYBP/SIP, SKP1, APC and TBL1X. Interacts with UBE2I. Interacts with alpha-tubulin. Interacts with PEG10, which may inhibit its activity. Interacts with PEG3 and HIPK2. Interacts with group 1 glutamate receptors GRM1 and GRM5. Interacts with DAB1, which may inhibit its activity. Interacts with UBE2E2. Interacts with SNCAIP. Interacts with HIPK2; the interaction is promoted by DAZAP2 and results in SIAH1-mediated ubiquitination and subsequent proteasomal degradation of HIPK2. Interacts with DAZAP2; the interaction is decreased following phosphorylation of DAZAP2 by HIPK2. Interacts with GAPDH; leading to stabilize SIAH1. Interacts with Bassoon/BSN and Piccolo/PLCO; these interactions negatively regulate SIAH1 E3 ligase activity. Interacts with DCC. Interacts with AXIN1; catalyzes AXIN1 ubiquitination and subsequent proteasome-mediated ubiquitin-dependent degradation. Phosphorylated on Ser-19 by ATM and ATR. This phosphorylation disrupts SIAH1 interaction with HIPK2, and subsequent proteasomal degradation of HIPK2.

It localises to the cytoplasm. The protein resides in the nucleus. It catalyses the reaction S-ubiquitinyl-[E2 ubiquitin-conjugating enzyme]-L-cysteine + [acceptor protein]-L-lysine = [E2 ubiquitin-conjugating enzyme]-L-cysteine + N(6)-ubiquitinyl-[acceptor protein]-L-lysine.. It participates in protein modification; protein ubiquitination. In terms of biological role, E3 ubiquitin-protein ligase that mediates ubiquitination and subsequent proteasomal degradation of target proteins. E3 ubiquitin ligases accept ubiquitin from an E2 ubiquitin-conjugating enzyme in the form of a thioester and then directly transfers the ubiquitin to targeted substrates. Mediates E3 ubiquitin ligase activity either through direct binding to substrates or by functioning as the essential RING domain subunit of larger E3 complexes. Triggers the ubiquitin-mediated degradation of many substrates, including proteins involved in transcription regulation (ELL2, MYB, POU2AF1, PML and RBBP8), a cell surface receptor (DCC), cytoplasmic signal transduction molecules (KLF10/TIEG1 and NUMB), an antiapoptotic protein (BAG1), a microtubule motor protein (KIF22), a protein involved in synaptic vesicle function in neurons (SYP), a structural protein (CTNNB1) and SNCAIP. Confers constitutive instability to HIPK2 through proteasomal degradation. It is thereby involved in many cellular processes such as apoptosis, tumor suppression, cell cycle, axon guidance, transcription, spermatogenesis and TNF-alpha signaling. Has some overlapping function with SIAH2. Induces apoptosis in cooperation with PEG3. Upon nitric oxid (NO) generation that follows apoptotic stimulation, interacts with S-nitrosylated GAPDH, mediating the translocation of GAPDH to the nucleus. GAPDH acts as a stabilizer of SIAH1, facilitating the degradation of nuclear proteins. Mediates ubiquitination and degradation of EGLN2 and EGLN3 in response to the unfolded protein response (UPR), leading to their degradation and subsequent stabilization of ATF4. Also part of the Wnt signaling pathway in which it mediates the Wnt-induced ubiquitin-mediated proteasomal degradation of AXIN1. The chain is E3 ubiquitin-protein ligase SIAH1 (Siah1) from Rattus norvegicus (Rat).